Consider the following 140-residue polypeptide: Nucleoside diphosphate kinase (140 aa).

Positions 11, 59, 87, 93, 104, and 114 each coordinate ATP. H117 (pros-phosphohistidine intermediate) is an active-site residue.

This sequence belongs to the NDK family. In terms of assembly, homotetramer. The cofactor is Mg(2+).

It localises to the cytoplasm. It catalyses the reaction a 2'-deoxyribonucleoside 5'-diphosphate + ATP = a 2'-deoxyribonucleoside 5'-triphosphate + ADP. It carries out the reaction a ribonucleoside 5'-diphosphate + ATP = a ribonucleoside 5'-triphosphate + ADP. Its function is as follows. Major role in the synthesis of nucleoside triphosphates other than ATP. The ATP gamma phosphate is transferred to the NDP beta phosphate via a ping-pong mechanism, using a phosphorylated active-site intermediate. This is Nucleoside diphosphate kinase from Methylobacterium nodulans (strain LMG 21967 / CNCM I-2342 / ORS 2060).